Consider the following 104-residue polypeptide: Colipase-like protein 2 (104 aa).

The signal sequence occupies residues 1 to 19 (MAFTQALVTVLAFLVGTLP). 5 disulfide bridges follow: Cys-38–Cys-49, Cys-44–Cys-60, Cys-48–Cys-82, Cys-70–Cys-90, and Cys-84–Cys-101.

Belongs to the colipase family.

It localises to the secreted. The chain is Colipase-like protein 2 (Clpsl2) from Rattus norvegicus (Rat).